Here is a 266-residue protein sequence, read N- to C-terminus: GTP-binding protein Rhes (266 aa).

26-33 contacts GTP; that stretch reads GASRVGKS. The Effector region signature appears at 48-56; the sequence is YTPTIEDFH. GTP is bound by residues 73–77 and 140–143; these read DTSGN and NKND. Residues 189–235 are interaction with GNB1, GNB2 and GNB3; the sequence is MAKLPHEMSPALHRKISVQYGDAFHPRPFCMRRVKEMDAYGMVSPFA. Cysteine 263 is subject to Cysteine methyl ester. Residue cysteine 263 is the site of S-farnesyl cysteine attachment. Positions 264–266 are cleaved as a propeptide — removed in mature form; it reads TIQ.

The protein belongs to the small GTPase superfamily. RasD family. Monomer (Potential). Interacts with PIK3CA and UBE2I. Interacts with GNB1, GNB2 and GNB3. Interacts with HTT; interacts with mutant HTT (mHTT) with a much higher affinity than wild type HTT. Farnesylated. Farnesylation is required for membrane targeting. As to expression, pancreatic endocrine cells (islets of Langerhans).

Its subcellular location is the cell membrane. Its function is as follows. GTPase signaling protein that binds to and hydrolyzes GTP. Regulates signaling pathways involving G-proteins-coupled receptor and heterotrimeric proteins such as GNB1, GNB2 and GNB3. May be involved in selected striatal competencies, mainly locomotor activity and motor coordination. This chain is GTP-binding protein Rhes (RASD2), found in Homo sapiens (Human).